Reading from the N-terminus, the 69-residue chain is Large ribosomal subunit protein bL31 (69 aa).

Zn(2+) is bound by residues Cys-17, Cys-19, Cys-37, and Cys-40.

This sequence belongs to the bacterial ribosomal protein bL31 family. Type A subfamily. In terms of assembly, part of the 50S ribosomal subunit. It depends on Zn(2+) as a cofactor.

Its function is as follows. Binds the 23S rRNA. The protein is Large ribosomal subunit protein bL31 of Clostridium botulinum (strain Eklund 17B / Type B).